Consider the following 363-residue polypeptide: UDP-N-acetylglucosamine--N-acetylmuramyl-(pentapeptide) pyrophosphoryl-undecaprenol N-acetylglucosamine transferase (363 aa).

UDP-N-acetyl-alpha-D-glucosamine is bound by residues threonine 10 to glycine 12, asparagine 124, arginine 161, serine 195, and glutamine 291.

The protein belongs to the glycosyltransferase 28 family. MurG subfamily.

It localises to the cell membrane. The catalysed reaction is di-trans,octa-cis-undecaprenyl diphospho-N-acetyl-alpha-D-muramoyl-L-alanyl-D-glutamyl-meso-2,6-diaminopimeloyl-D-alanyl-D-alanine + UDP-N-acetyl-alpha-D-glucosamine = di-trans,octa-cis-undecaprenyl diphospho-[N-acetyl-alpha-D-glucosaminyl-(1-&gt;4)]-N-acetyl-alpha-D-muramoyl-L-alanyl-D-glutamyl-meso-2,6-diaminopimeloyl-D-alanyl-D-alanine + UDP + H(+). It participates in cell wall biogenesis; peptidoglycan biosynthesis. Its function is as follows. Cell wall formation. Catalyzes the transfer of a GlcNAc subunit on undecaprenyl-pyrophosphoryl-MurNAc-pentapeptide (lipid intermediate I) to form undecaprenyl-pyrophosphoryl-MurNAc-(pentapeptide)GlcNAc (lipid intermediate II). The sequence is that of UDP-N-acetylglucosamine--N-acetylmuramyl-(pentapeptide) pyrophosphoryl-undecaprenol N-acetylglucosamine transferase from Streptomyces avermitilis (strain ATCC 31267 / DSM 46492 / JCM 5070 / NBRC 14893 / NCIMB 12804 / NRRL 8165 / MA-4680).